We begin with the raw amino-acid sequence, 179 residues long: Large ribosomal subunit protein uL6 (179 aa).

This sequence belongs to the universal ribosomal protein uL6 family. Part of the 50S ribosomal subunit.

In terms of biological role, this protein binds to the 23S rRNA, and is important in its secondary structure. It is located near the subunit interface in the base of the L7/L12 stalk, and near the tRNA binding site of the peptidyltransferase center. The chain is Large ribosomal subunit protein uL6 from Syntrophomonas wolfei subsp. wolfei (strain DSM 2245B / Goettingen).